Consider the following 132-residue polypeptide: Holo-[acyl-carrier-protein] synthase (132 aa).

Mg(2+) contacts are provided by D8 and E62.

It belongs to the P-Pant transferase superfamily. AcpS family. It depends on Mg(2+) as a cofactor.

Its subcellular location is the cytoplasm. The enzyme catalyses apo-[ACP] + CoA = holo-[ACP] + adenosine 3',5'-bisphosphate + H(+). Its function is as follows. Transfers the 4'-phosphopantetheine moiety from coenzyme A to a Ser of acyl-carrier-protein. This chain is Holo-[acyl-carrier-protein] synthase, found in Leptothrix cholodnii (strain ATCC 51168 / LMG 8142 / SP-6) (Leptothrix discophora (strain SP-6)).